The following is a 724-amino-acid chain: Ribosomal RNA processing protein 1 homolog B (724 aa).

The disordered stretch occupies residues 331-576; the sequence is NGAPLSSAED…SKKKKKTMKL (246 aa). Ser336 and Ser370 each carry phosphoserine. Residues 373–386 show a composition bias toward basic residues; sequence HIHKKKRKKRKRSH. Residues Ser432 and Ser438 each carry the phosphoserine modification. Residues 448 to 461 are compositionally biased toward basic residues; sequence HNKRKRPRKKKLRA. The span at 483–496 shows a compositional bias: low complexity; sequence SGHSQSSAAHISSS. Ser494 bears the Phosphoserine mark. Composition is skewed to polar residues over residues 513-528 and 548-564; these read DSSSDLPVQKSGTPTS and KTASSTLDPCDPSSQKP. An N6-acetyllysine modification is found at Lys618. Residues 625-649 are disordered; the sequence is AKNSSATRPQGPAGQLNKTPSSSKK. The span at 640–649 shows a compositional bias: polar residues; that stretch reads LNKTPSSSKK. A phosphoserine mark is found at Ser668 and Ser672. Arg678 is modified (citrulline). Residues 687-724 are disordered; the sequence is PLHGVLKTATSSPASTPLSPMRLPATTPKRRPRAADFF. Thr694 is subject to Phosphothreonine. The span at 694 to 706 shows a compositional bias: low complexity; sequence TATSSPASTPLSP. Phosphoserine is present on residues Ser698 and Ser701.

Belongs to the RRP1 family. As to quaternary structure, interacts with the transcriptional activator E2F1. Interacts with serine/threonine-protein phosphatase PP1 subunits PPP1CB and PPP1CC but not with PPP1CA. Interacts with 60S ribosomal proteins RPL5 and RPL27, ribosomal processing protein RRP1/NNP1 and other nucleolar proteins including NOP2/NOL1 and FBL. Also interacts with nucleolar protein NPM1/B23. Interacts with splicing factor SRSF1 and LUC7L3/CROP. Interacts with GTPase activator SIPA1. Interacts with H1-10, NCL, PARP1, TRIM28 and YBX3. Post-translationally, citrullinated by PADI4.

The protein localises to the nucleus. It is found in the nucleolus. Its subcellular location is the nucleoplasm. The protein resides in the chromosome. Positively regulates DNA damage-induced apoptosis by acting as a transcriptional coactivator of proapoptotic target genes of the transcriptional activator E2F1. Likely to play a role in ribosome biogenesis by targeting serine/threonine protein phosphatase PP1 to the nucleolus. Involved in regulation of mRNA splicing. Inhibits SIPA1 GTPase activity. Involved in regulating expression of extracellular matrix genes. Associates with chromatin and may play a role in modulating chromatin structure. The protein is Ribosomal RNA processing protein 1 homolog B (Rrp1b) of Mus musculus (Mouse).